Here is a 419-residue protein sequence, read N- to C-terminus: MANGAGNGGGGAGGNGGGGNNGAGNRAEELQPHPVKEQLPGIQYCVNSPPPWLEAVVLGFQHYLLSLGITVLIPSLLVPLMGGGDAEKVKVIQTLLFVSGLTTLFQSFFGTRLPVIASASYAYIIPITSIIYSTRFTYYTDPFERFVRTMRSIQGALIITGCFQVLVCFLGVWRNIVRFLSPLSIAPLVTFTGLGLYHIGFPLVKKGPMIWDGNRCDRYGMMLCIPVVWLFAQLLTSSGVYDHKPQTTQTSCRTDRTGLITNTPCPTFDITDSFAMMAASFVTLFESTGLFYASARYGKNVGLLAMTKVGSRRVIQISAAFMLFFSIFGKFGAFFASIPLPIMASLYCIVLCFVSSAGLSFLQFCNLNSFNTKFILGFSFFMAISIPQYFREYYNGVGRCDKSDIHVTYNGCGNNCDSA.

Gly residues predominate over residues 1 to 22 (MANGAGNGGGGAGGNGGGGNNG). The interval 1 to 28 (MANGAGNGGGGAGGNGGGGNNGAGNRAE) is disordered. The next 10 helical transmembrane spans lie at 64 to 84 (LLSL…MGGG), 91 to 111 (VIQT…FFGT), 113 to 133 (LPVI…IIYS), 153 to 173 (IQGA…LGVW), 184 to 204 (SIAP…FPLV), 220 to 240 (GMML…SSGV), 273 to 293 (SFAM…LFYA), 313 to 333 (RVIQ…KFGA), 334 to 354 (FFAS…LCFV), and 370 to 390 (FNTK…PQYF).

Belongs to the nucleobase:cation symporter-2 (NCS2) (TC 2.A.40) family.

It is found in the membrane. This Arabidopsis thaliana (Mouse-ear cress) protein is Putative nucleobase-ascorbate transporter 9 (NAT9).